Reading from the N-terminus, the 1084-residue chain is Myosin heavy chain, skeletal muscle (1084 aa).

3 disordered regions span residues 1–20 (SAET…KTKE), 270–292 (EIEA…SREL), and 298–317 (RLEE…KKRE). The tract at residues 1–258 (SAETEKEMAN…SKIEDEQALM (258 aa)) is alpha-helical tailpiece (S2). A rodlike tail (S2 and LMM domains) region spans residues 259–1084 (TNLQRIEELE…DVHSKVISEE (826 aa)). Residues 273–292 (AERASRAKAEKQRSDLSREL) show a composition bias toward basic and acidic residues. A coiled-coil region spans residues 455 to 1084 (QAFTQQIEGL…DVHSKVISEE (630 aa)).

In terms of assembly, muscle myosin is a hexameric protein that consists of 2 heavy chain subunits (MHC), 2 alkali light chain subunits (MLC) and 2 regulatory light chain subunits (MLC-2).

The protein localises to the cytoplasm. The protein resides in the myofibril. In terms of biological role, muscle contraction. The polypeptide is Myosin heavy chain, skeletal muscle (Oryctolagus cuniculus (Rabbit)).